Consider the following 597-residue polypeptide: Elongation factor 4 (597 aa).

In terms of domain architecture, tr-type G spans 2–184 (DHIRNFSIIA…SLIAKVPPPK (183 aa)). Residues 14–19 (DHGKST) and 131–134 (NKID) contribute to the GTP site.

It belongs to the TRAFAC class translation factor GTPase superfamily. Classic translation factor GTPase family. LepA subfamily.

The protein localises to the cell inner membrane. It catalyses the reaction GTP + H2O = GDP + phosphate + H(+). Functionally, required for accurate and efficient protein synthesis under certain stress conditions. May act as a fidelity factor of the translation reaction, by catalyzing a one-codon backward translocation of tRNAs on improperly translocated ribosomes. Back-translocation proceeds from a post-translocation (POST) complex to a pre-translocation (PRE) complex, thus giving elongation factor G a second chance to translocate the tRNAs correctly. Binds to ribosomes in a GTP-dependent manner. The polypeptide is Elongation factor 4 (Burkholderia pseudomallei (strain 1710b)).